A 396-amino-acid chain; its full sequence is Activity-regulated cytoskeleton-associated protein (396 aa).

The stretch at 54–78 forms a coiled coil; the sequence is SKQVERELKGLHRSVGKLESNLDGY. The interaction with SH3GL1 or SH3GL3 stretch occupies residues 89 to 100; the sequence is KSIKACLCRCQE. Positions 195-214 are interaction with DNM2; the sequence is QPWVPGEDGQPSPGVDTQIF. Ser260 carries the post-translational modification Phosphoserine. Glycyl lysine isopeptide (Lys-Gly) (interchain with G-Cter in ubiquitin) cross-links involve residues Lys268 and Lys269. A Phosphothreonine modification is found at Thr278. A disordered region spans residues 356–396; sequence QDDLEQAAEPAGPHLPVEDEAETLTPAPNSESVASDRTQPE. The span at 381–396 shows a compositional bias: polar residues; it reads PAPNSESVASDRTQPE.

It belongs to the ARC/ARG3.1 family. As to quaternary structure, homooligomer; homooligomerizes into virion-like capsids. Interacts with SH3GL1/endophilin-2, SH3GL3/endophilin-3 and DNM2/DYN2. Interacts with CAMK2B (in the kinase inactive state); leading to target ARC to inactive synapses. Interacts with PSEN1. In terms of processing, palmitoylation anchors the protein into the membrane by allowing direct insertion into the hydrophobic core of the lipid bilayer. Post-translationally, ubiquitinated by UBE3A, leading to its degradation by the proteasome, thereby promoting AMPA receptors (AMPARs) expression at synapses. Ubiquitinated by RNF216 at Lys-268 and Lys-269 limiting ARC protein levels induced by synaptic activity and thus regulating ARC-dependent forms of synaptic plasticity. Phosphorylation at Ser-260 by CaMK2 prevents homooligomerization into virion-like capsids by disrupting an interaction surface essential for high-order oligomerization. Phosphorylation by CaMK2 inhibits synaptic activity.

It localises to the extracellular vesicle membrane. It is found in the postsynaptic cell membrane. The protein localises to the synapse. The protein resides in the postsynaptic density. Its subcellular location is the early endosome membrane. It localises to the cell projection. It is found in the dendrite. The protein localises to the cytoplasm. The protein resides in the cytoskeleton. Its subcellular location is the cell cortex. It localises to the dendritic spine. It is found in the cytoplasmic vesicle. The protein localises to the secretory vesicle. The protein resides in the acrosome. Its subcellular location is the clathrin-coated vesicle membrane. Its function is as follows. Master regulator of synaptic plasticity that self-assembles into virion-like capsids that encapsulate RNAs and mediate intercellular RNA transfer in the nervous system. ARC protein is released from neurons in extracellular vesicles that mediate the transfer of ARC mRNA into new target cells, where ARC mRNA can undergo activity-dependent translation. ARC capsids are endocytosed and are able to transfer ARC mRNA into the cytoplasm of neurons. Acts as a key regulator of synaptic plasticity: required for protein synthesis-dependent forms of long-term potentiation (LTP) and depression (LTD) and for the formation of long-term memory. Regulates synaptic plasticity by promoting endocytosis of AMPA receptors (AMPARs) in response to synaptic activity: this endocytic pathway maintains levels of surface AMPARs in response to chronic changes in neuronal activity through synaptic scaling, thereby contributing to neuronal homeostasis. Acts as a postsynaptic mediator of activity-dependent synapse elimination in the developing cerebellum by mediating elimination of surplus climbing fiber synapses. Accumulates at weaker synapses, probably to prevent their undesired enhancement. This suggests that ARC-containing virion-like capsids may be required to eliminate synaptic material. Required to transduce experience into long-lasting changes in visual cortex plasticity and for long-term memory. Involved in postsynaptic trafficking and processing of amyloid-beta A4 (APP) via interaction with PSEN1. In addition to its role in synapses, also involved in the regulation of the immune system: specifically expressed in skin-migratory dendritic cells and regulates fast dendritic cell migration, thereby regulating T-cell activation. The chain is Activity-regulated cytoskeleton-associated protein from Homo sapiens (Human).